Reading from the N-terminus, the 118-residue chain is MARIAGINIPDQKHAVIALTAIYGIGKTRSQAILAEVGIAEDVKISELTEEQIDQLRDGVAKYTVEGDLRREVSMNIKRLMDLGCYRGLRHRRSLPLRGQRTKTNARTRKGPRKPIKK.

Residues 94 to 118 (SLPLRGQRTKTNARTRKGPRKPIKK) form a disordered region.

It belongs to the universal ribosomal protein uS13 family. Part of the 30S ribosomal subunit. Forms a loose heterodimer with protein S19. Forms two bridges to the 50S subunit in the 70S ribosome.

Located at the top of the head of the 30S subunit, it contacts several helices of the 16S rRNA. In the 70S ribosome it contacts the 23S rRNA (bridge B1a) and protein L5 of the 50S subunit (bridge B1b), connecting the 2 subunits; these bridges are implicated in subunit movement. Contacts the tRNAs in the A and P-sites. The protein is Small ribosomal subunit protein uS13 of Vibrio parahaemolyticus serotype O3:K6 (strain RIMD 2210633).